A 252-amino-acid polypeptide reads, in one-letter code: Mitochondrial intermembrane space import and assembly protein 40 (252 aa).

The N-terminal 31 residues, 1–31 (MYRTISRSSSGLIRQSTARLTRQLSTTRTTP), are a transit peptide targeting the mitochondrion. Residues 32–37 (SQYNSK) lie on the Mitochondrial matrix side of the membrane. The chain crosses the membrane as a helical; Signal-anchor for type II membrane protein span at residues 38-54 (LLLGVLGTGALAFGYFS). Residues 55-252 (QQSSLIQNAS…DKVKPNTKSD (198 aa)) are Mitochondrial intermembrane-facing. Over residues 90-123 (RQEKVIKENEQKTKKAEDAKTSSESKANVADKKS) the composition is skewed to basic and acidic residues. Residues 90-143 (RQEKVIKENEQKTKKAEDAKTSSESKANVADKKSNSQPEGEPEGEGKQEAAFNP) are disordered. Disulfide bonds link cysteine 152–cysteine 154, cysteine 163–cysteine 196, and cysteine 173–cysteine 186. The region spanning 160–204 (HGPCGEEFKEAFSCFVFSETEPKGIDCIKKFENMRSCFKRYPEHY) is the CHCH domain. Short sequence motifs (cx9C motif) lie at residues 163-173 (CGEEFKEAFSC) and 186-196 (CIKKFENMRSC). The tract at residues 230 to 252 (EPAIEQIEQGIKEDKVKPNTKSD) is disordered. A compositionally biased stretch (basic and acidic residues) spans 239–252 (GIKEDKVKPNTKSD).

Monomer. It depends on Cu(2+) as a cofactor. The cofactor is Zn(2+).

The protein resides in the mitochondrion inner membrane. Functionally, required for the import and folding of small cysteine-containing proteins (small Tim) in the mitochondrial intermembrane space (IMS). Forms a redox cycle with ERV1 that involves a disulfide relay system. Precursor proteins to be imported into the IMS are translocated in their reduced form into the mitochondria. The oxidized form of MIA40 forms a transient intermolecular disulfide bridge with the reduced precursor protein, resulting in oxidation of the precursor protein that now contains an intramolecular disulfide bond and is able to undergo folding in the IMS. The polypeptide is Mitochondrial intermembrane space import and assembly protein 40 (MIA40) (Candida albicans (strain SC5314 / ATCC MYA-2876) (Yeast)).